Consider the following 263-residue polypeptide: L-aspartate dehydrogenase (263 aa).

The NAD(+) site is built by A120 and N186. Residue H216 is part of the active site.

It belongs to the L-aspartate dehydrogenase family.

The catalysed reaction is L-aspartate + NADP(+) + H2O = oxaloacetate + NH4(+) + NADPH + H(+). It carries out the reaction L-aspartate + NAD(+) + H2O = oxaloacetate + NH4(+) + NADH + H(+). It functions in the pathway cofactor biosynthesis; NAD(+) biosynthesis; iminoaspartate from L-aspartate (dehydrogenase route): step 1/1. Its function is as follows. Specifically catalyzes the NAD or NADP-dependent dehydrogenation of L-aspartate to iminoaspartate. This is L-aspartate dehydrogenase from Acinetobacter baylyi (strain ATCC 33305 / BD413 / ADP1).